We begin with the raw amino-acid sequence, 309 residues long: Porphobilinogen deaminase (309 aa).

Cysteine 241 is subject to S-(dipyrrolylmethanemethyl)cysteine.

Belongs to the HMBS family. In terms of assembly, monomer. Dipyrromethane is required as a cofactor.

The catalysed reaction is 4 porphobilinogen + H2O = hydroxymethylbilane + 4 NH4(+). The protein operates within porphyrin-containing compound metabolism; protoporphyrin-IX biosynthesis; coproporphyrinogen-III from 5-aminolevulinate: step 2/4. In terms of biological role, tetrapolymerization of the monopyrrole PBG into the hydroxymethylbilane pre-uroporphyrinogen in several discrete steps. The polypeptide is Porphobilinogen deaminase (Bacillus cereus (strain AH187)).